The following is an 89-amino-acid chain: Small ribosomal subunit protein uS15 (89 aa).

The protein belongs to the universal ribosomal protein uS15 family. In terms of assembly, part of the 30S ribosomal subunit. Forms a bridge to the 50S subunit in the 70S ribosome, contacting the 23S rRNA.

One of the primary rRNA binding proteins, it binds directly to 16S rRNA where it helps nucleate assembly of the platform of the 30S subunit by binding and bridging several RNA helices of the 16S rRNA. Its function is as follows. Forms an intersubunit bridge (bridge B4) with the 23S rRNA of the 50S subunit in the ribosome. This is Small ribosomal subunit protein uS15 from Serratia proteamaculans (strain 568).